The following is a 103-amino-acid chain: NADH-ubiquinone oxidoreductase chain 4L (103 aa).

3 helical membrane passes run 6–26 (IFFLLFFSFVIFFLGILGIFI), 31–51 (IIIILVSIELMLLAVNFNFAI), and 65–85 (ILYTLTLAGAEAAIGLAILII).

This sequence belongs to the complex I subunit 4L family.

The protein resides in the mitochondrion membrane. The enzyme catalyses a ubiquinone + NADH + 5 H(+)(in) = a ubiquinol + NAD(+) + 4 H(+)(out). Functionally, core subunit of the mitochondrial membrane respiratory chain NADH dehydrogenase (Complex I) that is believed to belong to the minimal assembly required for catalysis. Complex I functions in the transfer of electrons from NADH to the respiratory chain. The immediate electron acceptor for the enzyme is believed to be ubiquinone. The sequence is that of NADH-ubiquinone oxidoreductase chain 4L (ND4L) from Acanthamoeba castellanii (Amoeba).